Here is a 142-residue protein sequence, read N- to C-terminus: MLNEFKEFIARGNVMDLAVGVIIGAAFSKIVDSVVNDLVMPVVGALTGGGFDFSDYFLPLSGNVTAQTLAAAREQGAVFAYGNFITVFINFLILAWIIFLLIKLVNRARASVEREKAPEPAAPPPQDILLLSEIRDLLKQRA.

Transmembrane regions (helical) follow at residues 14–34 (VMDL…VDSV) and 82–102 (GNFI…FLLI).

Belongs to the MscL family. As to quaternary structure, homopentamer.

It localises to the cell inner membrane. In terms of biological role, channel that opens in response to stretch forces in the membrane lipid bilayer. May participate in the regulation of osmotic pressure changes within the cell. The sequence is that of Large-conductance mechanosensitive channel from Sinorhizobium medicae (strain WSM419) (Ensifer medicae).